The sequence spans 273 residues: Exosome complex component Rrp42 (273 aa).

It belongs to the RNase PH family. Rrp42 subfamily. Component of the archaeal exosome complex. Forms a hexameric ring-like arrangement composed of 3 Rrp41-Rrp42 heterodimers. The hexameric ring associates with a trimer of Rrp4 and/or Csl4 subunits.

It is found in the cytoplasm. Functionally, non-catalytic component of the exosome, which is a complex involved in RNA degradation. Contributes to the structuring of the Rrp41 active site. In Thermococcus gammatolerans (strain DSM 15229 / JCM 11827 / EJ3), this protein is Exosome complex component Rrp42.